The sequence spans 334 residues: Transcription initiation factor IIB (334 aa).

A TFIIB-type zinc finger spans residues 34–65; the sequence is EELVCPMCDSKNIIKDYEKAEIVCEDCGCVLQ. Residues cysteine 38, cysteine 41, cysteine 57, and cysteine 60 each coordinate Zn(2+). Tandem repeats lie at residues 151-234 and 245-326.

It belongs to the TFIIB family.

Functionally, stabilizes TBP binding to an archaeal box-A promoter. Also responsible for recruiting RNA polymerase II to the pre-initiation complex (DNA-TBP-TFIIB). This is Transcription initiation factor IIB from Methanococcus aeolicus (strain ATCC BAA-1280 / DSM 17508 / OCM 812 / Nankai-3).